Reading from the N-terminus, the 602-residue chain is FAD-binding monooxygenase hmp7 (602 aa).

Residues 108 to 111 (TWYW), 120 to 121 (DV), and tyrosine 126 contribute to the FAD site. 118-120 (QCD) contributes to the NADP(+) binding site. Residues 252–258 (TGATAVQ) and 275–276 (RT) contribute to the NADP(+) site.

The protein belongs to the FAD-binding monooxygenase family. FAD is required as a cofactor.

It functions in the pathway secondary metabolite biosynthesis. FAD-binding monooxygenase; part of the gene cluster that mediates the biosynthesis of hypothemycin, a resorcylic acid lactone (RAL) that irreversibly inhibits a subset of protein kinases with a conserved cysteine in the ATP binding site such as human ERK2. The first step is performed by both PKSs hmp3 and hmp8 and leads to the production of 7',8'-dehydrozearalenol (DHZ). The highly reducing PKS hpm8 synthesizes the reduced hexaketide (7S,11S,2E,8E)-7,11-dihydroxy-dodeca-2,8-dienoate, which is transferred downstream to the non-reducing PKS hpm3. Hpm3 then extends the reduced hexaketide to a nonaketide, after which regioselective cyclization and macrolactonization affords DHZ. The next step is the conversion of DHZ into aigialomycin C and is performed by the O-methyltransferase hmp5, the FAD-binding monooxygenase hmp7, and the cytochrome P450 monooxygenase hmp1. The wide substrate tolerance of the hmp5 and hmp7 implies that the reactions from DHZ to aigialomycin C can occur in any order. The steps from aigialomycin C to hypothemycin are less well established. The FAD-linked oxidoreductase hmp9 presumably catalyzes oxidation of the C-6' hydroxyl to a ketone. The timing of this oxidation is important, since the resulting enone functional group is a Michael acceptor that can react spontaneously with glutathione, an abundant metabolite in fungal cells. The glutathione S-transferase hmp2 catalyzes cis-trans isomerization of the 7',8' double bond with equilibrium favoring the trans isomer. The hpm6-encoded transporter might preferentially pump hypothemycin out of the cell relative to the trans isomer aigialomycin A. The cis-to-trans isomerization may be coupled with C-4' hydroxylation, since all known hypothemycin analogs containing the enone functional group also have hydroxyl groups at both C-4' and C-5'. This chain is FAD-binding monooxygenase hmp7, found in Hypomyces subiculosus (Nectria subiculosa).